The chain runs to 327 residues: DNA-directed RNA polymerase subunit alpha (327 aa).

The tract at residues 1–233 (MVREKVKVST…NLFIPFLHVE (233 aa)) is alpha N-terminal domain (alpha-NTD). Positions 265–327 (KELAFQYIFI…KKILDILEKK (63 aa)) are alpha C-terminal domain (alpha-CTD).

The protein belongs to the RNA polymerase alpha chain family. In plastids the minimal PEP RNA polymerase catalytic core is composed of four subunits: alpha, beta, beta', and beta''. When a (nuclear-encoded) sigma factor is associated with the core the holoenzyme is formed, which can initiate transcription.

The protein localises to the plastid. It localises to the chloroplast. The catalysed reaction is RNA(n) + a ribonucleoside 5'-triphosphate = RNA(n+1) + diphosphate. In terms of biological role, DNA-dependent RNA polymerase catalyzes the transcription of DNA into RNA using the four ribonucleoside triphosphates as substrates. This is DNA-directed RNA polymerase subunit alpha from Olimarabidopsis pumila (Dwarf rocket).